A 1127-amino-acid polypeptide reads, in one-letter code: Elongation factor-like GTPase 1 (1127 aa).

Positions 17 to 272 (ANIRNICVLA…LLKTLWGDYY (256 aa)) constitute a tr-type G domain. GTP-binding positions include 26 to 33 (AHVDHGKT), 92 to 96 (DSPGH), and 146 to 149 (NKID). The segment at 429-496 (KPRPLTQEEM…VASVSRQPVS (68 aa)) is disordered. Composition is skewed to basic and acidic residues over residues 438-452 (MAQR…HAEK) and 474-484 (SPHEDEPRGDE). At lysine 528 the chain carries N6-acetyllysine.

This sequence belongs to the TRAFAC class translation factor GTPase superfamily. Classic translation factor GTPase family. As to quaternary structure, associates with the 60S ribosomal subunit. Found in a complex consisting of the 60S ribosomal subunit, SBDS and EFL1.

It carries out the reaction GTP + H2O = GDP + phosphate + H(+). Its activity is regulated as follows. GTPase activity is stimulated in the presence of 60S ribosome subunits. In terms of biological role, GTPase involved in the biogenesis of the 60S ribosomal subunit and translational activation of ribosomes. Together with SBDS, triggers the GTP-dependent release of EIF6 from 60S pre-ribosomes in the cytoplasm, thereby activating ribosomes for translation competence by allowing 80S ribosome assembly and facilitating EIF6 recycling to the nucleus, where it is required for 60S rRNA processing and nuclear export. The chain is Elongation factor-like GTPase 1 (Efl1) from Mus musculus (Mouse).